The primary structure comprises 369 residues: Ferredoxin--NADP reductase, chloroplastic (369 aa).

The transit peptide at Met-1 to Ala-55 directs the protein to the chloroplast. The FAD-binding FR-type domain occupies Lys-90–Met-212. FAD-binding positions include Arg-148 to Ser-151, Cys-169 to Lys-171, Tyr-175, Val-186 to Ser-188, and Thr-227. Residues Ser-151 and Lys-171 each coordinate NADP(+). NADP(+) contacts are provided by residues Thr-227, Val-259–Pro-260, Ser-289–Arg-290, Lys-299–Tyr-301, Gly-328–Leu-329, and Glu-367.

The protein belongs to the ferredoxin--NADP reductase type 1 family. FAD serves as cofactor.

Its subcellular location is the plastid. The protein localises to the chloroplast stroma. It is found in the chloroplast thylakoid membrane. It catalyses the reaction 2 reduced [2Fe-2S]-[ferredoxin] + NADP(+) + H(+) = 2 oxidized [2Fe-2S]-[ferredoxin] + NADPH. It functions in the pathway energy metabolism; photosynthesis. May play a key role in regulating the relative amounts of cyclic and non-cyclic electron flow to meet the demands of the plant for ATP and reducing power. This is Ferredoxin--NADP reductase, chloroplastic (PETH) from Spinacia oleracea (Spinach).